Reading from the N-terminus, the 257-residue chain is 1-(5-phosphoribosyl)-5-[(5-phosphoribosylamino)methylideneamino] imidazole-4-carboxamide isomerase (257 aa).

Asp-8 (proton acceptor) is an active-site residue. The active-site Proton donor is the Asp-129.

It belongs to the HisA/HisF family.

The protein resides in the cytoplasm. It carries out the reaction 1-(5-phospho-beta-D-ribosyl)-5-[(5-phospho-beta-D-ribosylamino)methylideneamino]imidazole-4-carboxamide = 5-[(5-phospho-1-deoxy-D-ribulos-1-ylimino)methylamino]-1-(5-phospho-beta-D-ribosyl)imidazole-4-carboxamide. Its pathway is amino-acid biosynthesis; L-histidine biosynthesis; L-histidine from 5-phospho-alpha-D-ribose 1-diphosphate: step 4/9. The polypeptide is 1-(5-phosphoribosyl)-5-[(5-phosphoribosylamino)methylideneamino] imidazole-4-carboxamide isomerase (Rippkaea orientalis (strain PCC 8801 / RF-1) (Cyanothece sp. (strain PCC 8801))).